We begin with the raw amino-acid sequence, 401 residues long: Secreted LysM effector Blys8 (401 aa).

A signal peptide spans 1-19 (MRTLAIFFIGAAVAAHVSP). In terms of domain architecture, LysM 1 spans 42-89 (TYYDEAYDKSYTCDDLLSAWVISKQDFESWNPAVGSDCKLVLGHSYCV). Over residues 98–136 (STTTTTTTSTTTKTTTKTTTTTTAAPKPTSSAPSGPSPT) the composition is skewed to low complexity. Positions 98-137 (STTTTTTTSTTTKTTTKTTTTTTAAPKPTSSAPSGPSPTQ) are disordered. The LysM 2 domain maps to 146–193 (AYYFVKAGDTCDKISQMYGTFSTAQFIEWNPAVGSSCTGLWAGYYYCV). Residues 201–223 (SRTSTAGPTSTKPANGVTTPQPT) form a disordered region. In terms of domain architecture, LysM 3 spans 233–279 (QFVYVQPGDQCGTVASRAGVSLSDFLQWNPSTGKDCSGLWANAYACV).

Belongs to the secreted LysM effector family.

Might have a role in sequestration of chitin oligosaccharides (breakdown products of fungal cell walls that are released during invasion and act as triggers of host immunity) to dampen host defense. In Beauveria bassiana (strain ARSEF 2860) (White muscardine disease fungus), this protein is Secreted LysM effector Blys8.